Consider the following 240-residue polypeptide: Lipoprotein signal peptidase (240 aa).

Transmembrane regions (helical) follow at residues 38-58, 73-93, 98-118, and 120-140; these read LIWK…TSFL, LIPG…FGTL, PSLV…VLLF, and SNYL…SNII. Catalysis depends on residues Asp-162 and Asp-179. Residues 177–197 traverse the membrane as a helical segment; it reads FPDTFVIIGMIFVGIQIIISF.

It belongs to the peptidase A8 family.

The protein localises to the cell membrane. The enzyme catalyses Release of signal peptides from bacterial membrane prolipoproteins. Hydrolyzes -Xaa-Yaa-Zaa-|-(S,diacylglyceryl)Cys-, in which Xaa is hydrophobic (preferably Leu), and Yaa (Ala or Ser) and Zaa (Gly or Ala) have small, neutral side chains.. Its pathway is protein modification; lipoprotein biosynthesis (signal peptide cleavage). In terms of biological role, this protein specifically catalyzes the removal of signal peptides from prolipoproteins. This is Lipoprotein signal peptidase from Malacoplasma penetrans (strain HF-2) (Mycoplasma penetrans).